We begin with the raw amino-acid sequence, 532 residues long: Fatty aldehyde dehydrogenase HFD1 (532 aa).

Serine 111 is subject to Phosphoserine. Residues 134-152 (IIAPFNFPLLLAFAPLAAA) form a helical membrane-spanning segment. Residue 214–219 (GSPRVG) participates in NAD(+) binding. Residues glutamate 236 and cysteine 273 contribute to the active site.

It belongs to the aldehyde dehydrogenase family.

It is found in the lipid droplet. The protein resides in the mitochondrion outer membrane. It localises to the endosome membrane. The protein localises to the cytoplasmic granule membrane. It carries out the reaction an aldehyde + NAD(+) + H2O = a carboxylate + NADH + 2 H(+). The catalysed reaction is hexadecanoate + NADH + 2 H(+) = hexadecanal + NAD(+) + H2O. The enzyme catalyses 4-hydroxybenzaldehyde + NAD(+) + H2O = 4-hydroxybenzoate + NADH + 2 H(+). Its function is as follows. Catalyzes the oxidation of long-chain aliphatic aldehydes to fatty acids. Responsible for conversion of the sphingosine 1-phosphate (S1P) degradation product hexadecenal to hexadecenoic acid. Involved in coenzyme Q (CoQ) biosynthesis, catalyzing the last step in the tyrosine to 4-hydroxybenzoate (4-HB) pathway. Oxidizes 4-hydroxybenzaldehyde (4-Hbz) to 4-HB, the aromatic precursor for coenzyme Q. This is Fatty aldehyde dehydrogenase HFD1 (HFD1) from Saccharomyces cerevisiae (strain ATCC 204508 / S288c) (Baker's yeast).